Consider the following 506-residue polypeptide: DEAD-box ATP-dependent RNA helicase CshA (506 aa).

A Q motif motif is present at residues 2–30 (QNFKELGISDNTVQSLESMGFKEPTPIQK). The region spanning 33–203 (IPYALQGIDI…QQFMKSPKII (171 aa)) is the Helicase ATP-binding domain. Residue 46–53 (AQTGTGKT) participates in ATP binding. The DEAD box signature appears at 150–153 (DEAD). Residues 214-375 (QIEEFYTIVK…LRPPHRKEVL (162 aa)) enclose the Helicase C-terminal domain. A disordered region spans residues 436–506 (EKPLSRKGRN…KGRTFADHQK (71 aa)). The span at 468 to 480 (KRSKGYSSKKKST) shows a compositional bias: basic residues.

This sequence belongs to the DEAD box helicase family. CshA subfamily. As to quaternary structure, oligomerizes, may be a member of the RNA degradosome.

Its subcellular location is the cytoplasm. The catalysed reaction is ATP + H2O = ADP + phosphate + H(+). DEAD-box RNA helicase possibly involved in RNA degradation. Unwinds dsRNA in both 5'- and 3'-directions, has RNA-dependent ATPase activity. The chain is DEAD-box ATP-dependent RNA helicase CshA from Staphylococcus aureus (strain bovine RF122 / ET3-1).